The sequence spans 371 residues: Anhydro-N-acetylmuramic acid kinase (371 aa).

An ATP-binding site is contributed by 12 to 19 (GTSADGID).

This sequence belongs to the anhydro-N-acetylmuramic acid kinase family.

It catalyses the reaction 1,6-anhydro-N-acetyl-beta-muramate + ATP + H2O = N-acetyl-D-muramate 6-phosphate + ADP + H(+). It participates in amino-sugar metabolism; 1,6-anhydro-N-acetylmuramate degradation. It functions in the pathway cell wall biogenesis; peptidoglycan recycling. In terms of biological role, catalyzes the specific phosphorylation of 1,6-anhydro-N-acetylmuramic acid (anhMurNAc) with the simultaneous cleavage of the 1,6-anhydro ring, generating MurNAc-6-P. Is required for the utilization of anhMurNAc either imported from the medium or derived from its own cell wall murein, and thus plays a role in cell wall recycling. The polypeptide is Anhydro-N-acetylmuramic acid kinase (Saccharophagus degradans (strain 2-40 / ATCC 43961 / DSM 17024)).